We begin with the raw amino-acid sequence, 75 residues long: DNA-directed RNA polymerase subunit Rpo5 (75 aa).

This sequence belongs to the archaeal Rpo5/eukaryotic RPB5 RNA polymerase subunit family. As to quaternary structure, part of the RNA polymerase complex.

It localises to the cytoplasm. It carries out the reaction RNA(n) + a ribonucleoside 5'-triphosphate = RNA(n+1) + diphosphate. Functionally, DNA-dependent RNA polymerase (RNAP) catalyzes the transcription of DNA into RNA using the four ribonucleoside triphosphates as substrates. In Halobacterium salinarum (strain ATCC 700922 / JCM 11081 / NRC-1) (Halobacterium halobium), this protein is DNA-directed RNA polymerase subunit Rpo5.